Consider the following 97-residue polypeptide: Putative pterin-4-alpha-carbinolamine dehydratase (97 aa).

This sequence belongs to the pterin-4-alpha-carbinolamine dehydratase family.

It carries out the reaction (4aS,6R)-4a-hydroxy-L-erythro-5,6,7,8-tetrahydrobiopterin = (6R)-L-erythro-6,7-dihydrobiopterin + H2O. This chain is Putative pterin-4-alpha-carbinolamine dehydratase, found in Dinoroseobacter shibae (strain DSM 16493 / NCIMB 14021 / DFL 12).